A 309-amino-acid chain; its full sequence is Metal ABC transporter substrate-binding lipoprotein SsaB (309 aa).

An N-terminal signal peptide occupies residues 1-19; that stretch reads MKKLGFLSLLLLAVCTLFA. The N-palmitoyl cysteine moiety is linked to residue C20. Residue C20 is the site of S-diacylglycerol cysteine attachment. A divalent metal cation is bound by residues H67, H139, E205, and D280.

The protein belongs to the bacterial solute-binding protein 9 family. Lipoprotein receptor antigen (Lrai) subfamily. Homodimer and homotrimer.

The protein localises to the cell membrane. In terms of biological role, part of an ATP-binding cassette (ABC) transport system involved in metal import. Binds a metal with high affinity and specificity and delivers it to the membrane permease for translocation into the cytoplasm. Also acts as an adhesin which is involved on adherence to extracellular matrix. It is an important factor in the pathogenesis and infection. May contribute to the formation and accumulation of dental plaque. The sequence is that of Metal ABC transporter substrate-binding lipoprotein SsaB (ssaB) from Streptococcus sanguinis.